The sequence spans 339 residues: MTRTKYQQLQPEERMRIEIWKAEDVSLRAMARRLGRAPSTLMRELRRNATARGGYGAMSAQACRTQRLKASRPVAKLAPDGVLWGVVRHFLDQKWSPQEISATLKRAFPDQPDLNVSHETIYNAIYAYPRGELRRQLIACLRQARTKRLPRSRGTDRRGQIPDMVSIHVRPPEVNDRLMPGHWEGDLIKGAGNQSAVGVLVERMSRAVLLVKMPDATAASALAGFTGKLQSLVAPLRQTLTYDQGREMARHAELSAATGVRVYFCDPHSPWQRGTCENTNGLLRQYLPKGTDLSVYSQEELDAIADSLNGRPRKTLNWHSPLQVLAQVLANPTDRLPVQ.

In terms of domain architecture, Integrase catalytic spans 176 to 329 (DRLMPGHWEG…SPLQVLAQVL (154 aa)).

Belongs to the transposase IS30 family.

Functionally, required for the transposition of the insertion element. This Cupriavidus metallidurans (strain ATCC 43123 / DSM 2839 / NBRC 102507 / CH34) (Ralstonia metallidurans) protein is Transposase for insertion sequence element IS1086 (IS1086).